A 122-amino-acid chain; its full sequence is Cofilin-5 (122 aa).

The 120-residue stretch at 3-122 (SRIIEIDPNC…VKDLIQLSNL (120 aa)) folds into the ADF-H domain.

Belongs to the actin-binding proteins ADF family.

The protein resides in the cytoplasm. It localises to the cytoskeleton. Controls actin polymerization and depolymerization. This chain is Cofilin-5 (cofF), found in Dictyostelium discoideum (Social amoeba).